Here is a 424-residue protein sequence, read N- to C-terminus: CinA-like protein (424 aa).

It belongs to the CinA family.

The chain is CinA-like protein from Shewanella piezotolerans (strain WP3 / JCM 13877).